The following is a 309-amino-acid chain: SUR7 family protein FMP45 (309 aa).

Over 1–5 (MIFKR) the chain is Cytoplasmic. The helical transmembrane segment at 6 to 26 (FVNLLVFLFLLGAGLLTFFLI) threads the bilayer. Over 27–116 (LSGGRESGTL…YYLSRVGWAM (90 aa)) the chain is Extracellular. The N-linked (GlcNAc...) asparagine glycan is linked to Asn73. The helical transmembrane segment at 117–137 (LLISLFFIVLALVPGFLATFL) threads the bilayer. Over 138 to 140 (PFK) the chain is Cytoplasmic. A helical transmembrane segment spans residues 141-161 (AVPVLYCVLSWLAFFFIILAA). Topologically, residues 162 to 188 (CLYTGCYVKARKTFRNSGRSARLGPKN) are extracellular. The helical transmembrane segment at 189–209 (FAFIWTSVFLMLVNAIWSTIF) threads the bilayer. Residues 210 to 309 (SATHKAHSTY…GLAGPVTVRD (100 aa)) are Cytoplasmic-facing. Ser230 and Ser232 each carry phosphoserine. Thr235 is subject to Phosphothreonine. A disordered region spans residues 253-309 (GPITAAPVVGQPQPTTTTTPAGNGKFFQKLKTRKQVPSAELEPAGDGGLAGPVTVRD). Over residues 258–274 (APVVGQPQPTTTTTPAG) the composition is skewed to low complexity.

It belongs to the SUR7 family.

Its subcellular location is the cell membrane. Involved in sporulation and affects the sphingolipid composition of the plasma membrane. This chain is SUR7 family protein FMP45 (FMP45), found in Saccharomyces cerevisiae (strain ATCC 204508 / S288c) (Baker's yeast).